We begin with the raw amino-acid sequence, 125 residues long: Fluoride-specific ion channel FluC (125 aa).

A run of 4 helical transmembrane segments spans residues 4-24, 35-55, 68-88, and 100-120; these read IALV…VGVW, WGTL…VELV, FLVT…LDAV, and AFYI…GLAL. Residues Gly-75 and Thr-78 each contribute to the Na(+) site.

The protein belongs to the fluoride channel Fluc/FEX (TC 1.A.43) family.

The protein localises to the cell inner membrane. It catalyses the reaction fluoride(in) = fluoride(out). With respect to regulation, na(+) is not transported, but it plays an essential structural role and its presence is essential for fluoride channel function. Its function is as follows. Fluoride-specific ion channel. Important for reducing fluoride concentration in the cell, thus reducing its toxicity. This Agrobacterium fabrum (strain C58 / ATCC 33970) (Agrobacterium tumefaciens (strain C58)) protein is Fluoride-specific ion channel FluC.